A 603-amino-acid chain; its full sequence is Elongation factor 4 (603 aa).

The region spanning 7–191 (SNIRNFSIVA…AIVTRLPPPK (185 aa)) is the tr-type G domain. GTP-binding positions include 19 to 24 (DHGKST) and 138 to 141 (NKVD).

Belongs to the TRAFAC class translation factor GTPase superfamily. Classic translation factor GTPase family. LepA subfamily.

It localises to the cell inner membrane. The catalysed reaction is GTP + H2O = GDP + phosphate + H(+). Functionally, required for accurate and efficient protein synthesis under certain stress conditions. May act as a fidelity factor of the translation reaction, by catalyzing a one-codon backward translocation of tRNAs on improperly translocated ribosomes. Back-translocation proceeds from a post-translocation (POST) complex to a pre-translocation (PRE) complex, thus giving elongation factor G a second chance to translocate the tRNAs correctly. Binds to ribosomes in a GTP-dependent manner. In Bradyrhizobium diazoefficiens (strain JCM 10833 / BCRC 13528 / IAM 13628 / NBRC 14792 / USDA 110), this protein is Elongation factor 4.